Consider the following 335-residue polypeptide: Galactosylgalactosylxylosylprotein 3-beta-glucuronosyltransferase 3 (335 aa).

Topologically, residues 1–7 (MKLKLKN) are cytoplasmic. Residues 8 to 28 (VFLAYFLVSIAGLLYALVQLG) traverse the membrane as a helical; Signal-anchor for type II membrane protein segment. Residues 29–335 (QPCDCLPPLR…GRGSDPAIEV (307 aa)) lie on the Lumenal side of the membrane. Residues 82-84 (PTY), aspartate 113, arginine 156, arginine 161, and 194-196 (DDD) contribute to the UDP-alpha-D-glucuronate site. Aspartate 196 is a Mn(2+) binding site. The interaction with galactose moiety of substrate glycoprotein stretch occupies residues 243–252 (WEPSRPFPVD). Glutamate 281 serves as the catalytic Proton donor/acceptor. N-linked (GlcNAc...) asparagine glycosylation occurs at asparagine 300. Residue 308–310 (HTR) coordinates UDP-alpha-D-glucuronate. Residues 312–322 (EKPKMKQEEQL) are compositionally biased toward basic and acidic residues. Residues 312-335 (EKPKMKQEEQLQRQGRGSDPAIEV) form a disordered region.

The protein belongs to the glycosyltransferase 43 family. In terms of assembly, homodimer; disulfide-linked. Interacts with PXYLP1; the interaction increases the 2-phosphoxylose phosphatase activity of PXYLP1 during completion of linkage region formation in a B3GAT3-mediated manner. Requires Mn(2+) as cofactor. Post-translationally, N-glycosylated. Ubiquitous (but weakly expressed in all tissues examined).

Its subcellular location is the golgi apparatus membrane. The protein resides in the golgi apparatus. It is found in the cis-Golgi network. It carries out the reaction 3-O-(beta-D-galactosyl-(1-&gt;3)-beta-D-galactosyl-(1-&gt;4)-beta-D-xylosyl)-L-seryl-[protein] + UDP-alpha-D-glucuronate = 3-O-(beta-D-GlcA-(1-&gt;3)-beta-D-Gal-(1-&gt;3)-beta-D-Gal-(1-&gt;4)-beta-D-Xyl)-L-seryl-[protein] + UDP + H(+). It participates in protein modification; protein glycosylation. With respect to regulation, inhibited by EDTA. Its function is as follows. Glycosaminoglycans biosynthesis. Involved in forming the linkage tetrasaccharide present in heparan sulfate and chondroitin sulfate. Transfers a glucuronic acid moiety from the uridine diphosphate-glucuronic acid (UDP-GlcUA) to the common linkage region trisaccharide Gal-beta-1,3-Gal-beta-1,4-Xyl covalently bound to a Ser residue at the glycosaminylglycan attachment site of proteoglycans. Can also play a role in the biosynthesis of l2/HNK-1 carbohydrate epitope on glycoproteins. Shows strict specificity for Gal-beta-1,3-Gal-beta-1,4-Xyl, exhibiting negligible incorporation into other galactoside substrates including Galbeta1-3Gal beta1-O-benzyl, Galbeta1-4GlcNAc and Galbeta1-4Glc. Stimulates 2-phosphoxylose phosphatase activity of PXYLP1 in presence of uridine diphosphate-glucuronic acid (UDP-GlcUA) during completion of linkage region formation. The polypeptide is Galactosylgalactosylxylosylprotein 3-beta-glucuronosyltransferase 3 (B3GAT3) (Homo sapiens (Human)).